Here is a 387-residue protein sequence, read N- to C-terminus: GDP-mannose transporter (387 aa).

A compositionally biased stretch (basic and acidic residues) spans 1-25 (MADTKKNDNYAIDMDKLDAESDRFR). Residues 1–42 (MADTKKNDNYAIDMDKLDAESDRFRPPPQPQPRHSSSSHSQS) lie on the Cytoplasmic side of the membrane. Residues 1–45 (MADTKKNDNYAIDMDKLDAESDRFRPPPQPQPRHSSSSHSQSISN) form a disordered region. Residues 32-45 (PRHSSSSHSQSISN) show a composition bias toward low complexity. A helical transmembrane segment spans residues 43–63 (ISNSPVLPILSYCASSILMTV). The Lumenal segment spans residues 64–71 (TNKYVLSG). A helical transmembrane segment spans residues 72–92 (VQFNLNFFLLCVQSVVCIIAI). Residues 93-112 (QTCKSMGLINYRDFNSDEAK) are Cytoplasmic-facing. Residues 113–129 (KWFPISLLLIGMIYTGT) traverse the membrane as a helical segment. At 130-136 (KALKFLS) the chain is on the lumenal side. The helical transmembrane segment at 137–153 (IPVYTIFKNLTIILIAY) threads the bilayer. Residues 154-162 (GEVLWFGGS) lie on the Cytoplasmic side of the membrane. A helical membrane pass occupies residues 163-184 (VTGMALFSFGLMVLSSVIAAWA). Over 185-206 (DIKHALDTSGFSGAEATSKIST) the chain is Lumenal. Residues 207 to 227 (LNAGYIWMLINCLCTSTYILG) traverse the membrane as a helical segment. Topologically, residues 228-241 (MRKRIKLTNFKDFD) are cytoplasmic. The helical transmembrane segment at 242-262 (TMFYNNLLSIPILMIGSFIVE) threads the bilayer. Topologically, residues 263 to 280 (DWSSENINKNFPIETRNS) are lumenal. Residues 281–301 (LIFAMIFSGLSSVFISYTSAW) traverse the membrane as a helical segment. The Cytoplasmic portion of the chain corresponds to 302-309 (CVRVTSST). The helical transmembrane segment at 310–329 (TYSMVGALNKLPIALSGLIF) threads the bilayer. The Lumenal portion of the chain corresponds to 330–332 (FGD). A helical membrane pass occupies residues 333–355 (PVTVPSVSAIVVGFISGIVYSLA). At 356–387 (KVKQNAKPRTGVLPTTNPVSASTQSMRDGLKS) the chain is on the cytoplasmic side. The tract at residues 366–387 (GVLPTTNPVSASTQSMRDGLKS) is disordered. Polar residues predominate over residues 368 to 381 (LPTTNPVSASTQSM).

This sequence belongs to the TPT transporter family. SLC35D subfamily. In terms of assembly, homooligomer.

It is found in the golgi apparatus membrane. Its subcellular location is the cytoplasmic vesicle membrane. It localises to the endoplasmic reticulum membrane. Involved in the import of GDP-mannose from the cytoplasm into the Golgi lumen. The chain is GDP-mannose transporter (VRG4) from Coccidioides immitis (strain RS) (Valley fever fungus).